The chain runs to 118 residues: MADPILYSQALAHGRRIKGSVSKVRRVLDQIRGRSYREALIMLEFMPYRSTAPITKVLRSAVANAEHNLGLDPSTLIINRATADMGSSMKRYRPRAQGRAFAIKKQTCHISIGVVTQT.

It belongs to the universal ribosomal protein uL22 family. Part of the 50S ribosomal subunit.

The protein localises to the plastid. It is found in the organellar chromatophore. Functionally, this protein binds specifically to 23S rRNA. The globular domain of the protein is located near the polypeptide exit tunnel on the outside of the subunit, while an extended beta-hairpin is found that lines the wall of the exit tunnel in the center of the 70S ribosome. This chain is Large ribosomal subunit protein uL22c (rpl22), found in Paulinella chromatophora.